The sequence spans 180 residues: Inner membrane-spanning protein YciB (180 aa).

The next 5 helical transmembrane spans lie at 25–45 (QNAT…CYFV), 54–74 (IISV…GNSI), 76–96 (IKIK…MSGI), 118–138 (ITLS…NEIV), and 150–170 (FKVF…LPLL).

Belongs to the YciB family.

It is found in the cell inner membrane. Functionally, plays a role in cell envelope biogenesis, maintenance of cell envelope integrity and membrane homeostasis. This Rickettsia canadensis (strain McKiel) protein is Inner membrane-spanning protein YciB.